Reading from the N-terminus, the 307-residue chain is B3 domain-containing protein At5g18000 (307 aa).

Residues 20 to 115 (FFKILRREDH…CFNVTIFEAD (96 aa)) constitute a DNA-binding region (TF-B3 1). Disordered regions lie at residues 122–141 (PRKT…RKSI) and 151–209 (IESW…SEAG). Positions 166-177 (ESTSGRLTQKQE) are enriched in polar residues. Residues 178 to 192 (LNLRKKEADKTEKSK) show a composition bias toward basic and acidic residues. Residues 214 to 307 (IPEFKLTIKK…TEMRVKVSKE (94 aa)) constitute a DNA-binding region (TF-B3 2).

The protein resides in the nucleus. This is B3 domain-containing protein At5g18000 from Arabidopsis thaliana (Mouse-ear cress).